We begin with the raw amino-acid sequence, 253 residues long: tRNA pseudouridine synthase A (253 aa).

D53 functions as the Nucleophile in the catalytic mechanism. Position 111 (Y111) interacts with substrate.

This sequence belongs to the tRNA pseudouridine synthase TruA family. As to quaternary structure, homodimer.

The enzyme catalyses uridine(38/39/40) in tRNA = pseudouridine(38/39/40) in tRNA. Functionally, formation of pseudouridine at positions 38, 39 and 40 in the anticodon stem and loop of transfer RNAs. This Oceanobacillus iheyensis (strain DSM 14371 / CIP 107618 / JCM 11309 / KCTC 3954 / HTE831) protein is tRNA pseudouridine synthase A.